Here is an 82-residue protein sequence, read N- to C-terminus: Immediate early response 3-interacting protein 1 (82 aa).

The next 2 helical transmembrane spans lie at 2-22 (AFTL…IAVL) and 62-82 (VMRV…LLFG).

The protein belongs to the YOS1 family.

The protein resides in the endoplasmic reticulum membrane. In terms of biological role, regulator of endoplasmic reticulum secretion that acts as a key determinant of brain size. Required for secretion of extracellular matrix proteins. Required for correct brain development by depositing sufficient extracellular matrix proteins for tissue integrity and the proliferation of neural progenitors. Acts as a regulator of the unfolded protein response (UPR). This chain is Immediate early response 3-interacting protein 1, found in Danio rerio (Zebrafish).